The sequence spans 244 residues: MPLILLPAVDVVEGRAVRLVQGKAGSETEYGSALDAALGWQRDGAEWIHLVDLDAAFGRGSNRELLAEVVGKLDVAVELSGGIRDDDSLAAALATGCARVNLGTAALENPQWCARMIAEHGEKVAVGLDVQIVGGKHRLRGRGWETDGGDLWEVLQRLDSEGCSRYVVTDVTKDGTLAGPNLELLAGVAGRTEAPVIASGGVSSLDDLRAIATLTGQGVEGAIVGKALYAGRFTLPQALTAVRE.

Asp-10 acts as the Proton acceptor in catalysis. Catalysis depends on Asp-129, which acts as the Proton donor.

Belongs to the HisA/HisF family.

The protein resides in the cytoplasm. It catalyses the reaction 1-(5-phospho-beta-D-ribosyl)-5-[(5-phospho-beta-D-ribosylamino)methylideneamino]imidazole-4-carboxamide = 5-[(5-phospho-1-deoxy-D-ribulos-1-ylimino)methylamino]-1-(5-phospho-beta-D-ribosyl)imidazole-4-carboxamide. The enzyme catalyses N-(5-phospho-beta-D-ribosyl)anthranilate = 1-(2-carboxyphenylamino)-1-deoxy-D-ribulose 5-phosphate. It functions in the pathway amino-acid biosynthesis; L-histidine biosynthesis; L-histidine from 5-phospho-alpha-D-ribose 1-diphosphate: step 4/9. It participates in amino-acid biosynthesis; L-tryptophan biosynthesis; L-tryptophan from chorismate: step 3/5. Its function is as follows. Involved in both the histidine and tryptophan biosynthetic pathways. The sequence is that of Phosphoribosyl isomerase A from Mycobacterium ulcerans (strain Agy99).